The following is a 345-amino-acid chain: Ferrochelatase (345 aa).

Residues histidine 215 and glutamate 296 each contribute to the Fe cation site.

This sequence belongs to the ferrochelatase family.

Its subcellular location is the cytoplasm. It carries out the reaction heme b + 2 H(+) = protoporphyrin IX + Fe(2+). The protein operates within porphyrin-containing compound metabolism; protoheme biosynthesis; protoheme from protoporphyrin-IX: step 1/1. Functionally, catalyzes the ferrous insertion into protoporphyrin IX. This is Ferrochelatase from Rhodopseudomonas palustris (strain TIE-1).